The sequence spans 108 residues: Nucleoid-associated protein GK0018 (108 aa).

A disordered region spans residues Met1–Glu32. Over residues Met9 to Lys18 the composition is skewed to low complexity. A compositionally biased stretch (basic and acidic residues) spans Met19–Glu32.

This sequence belongs to the YbaB/EbfC family. Homodimer.

Its subcellular location is the cytoplasm. The protein resides in the nucleoid. Binds to DNA and alters its conformation. May be involved in regulation of gene expression, nucleoid organization and DNA protection. This chain is Nucleoid-associated protein GK0018, found in Geobacillus kaustophilus (strain HTA426).